The sequence spans 249 residues: LexA repressor (249 aa).

A disordered region spans residues 1 to 26 (MAAQATGGRATQRSQQSPAKPKGLTV). Residues 9–18 (RATQRSQQSP) are compositionally biased toward polar residues. The segment at residues 48 to 68 (MREIGDTVGLASLSSVTHQLS) is a DNA-binding region (H-T-H motif). Active-site for autocatalytic cleavage activity residues include Ser-173 and Lys-210.

The protein belongs to the peptidase S24 family. In terms of assembly, homodimer.

It catalyses the reaction Hydrolysis of Ala-|-Gly bond in repressor LexA.. Functionally, represses a number of genes involved in the response to DNA damage (SOS response), including recA and lexA. In the presence of single-stranded DNA, RecA interacts with LexA causing an autocatalytic cleavage which disrupts the DNA-binding part of LexA, leading to derepression of the SOS regulon and eventually DNA repair. The protein is LexA repressor of Arthrobacter sp. (strain FB24).